The primary structure comprises 146 residues: Hemoglobin subunit beta-2 (146 aa).

Positions 2–146 constitute a Globin domain; sequence EWTDFERATI…VVSSLGRQYH (145 aa). Heme b is bound by residues His63 and His92.

It belongs to the globin family. Hb2 is a heterotetramer of two alpha chains and two beta-2 chains. As to expression, red blood cells.

Functionally, involved in oxygen transport from gills to the various peripheral tissues. The protein is Hemoglobin subunit beta-2 (hbb2) of Pseudaphritis urvillii (Congolli).